Here is a 153-residue protein sequence, read N- to C-terminus: Ribosome maturation factor RimP (153 aa).

The protein belongs to the RimP family.

Its subcellular location is the cytoplasm. Functionally, required for maturation of 30S ribosomal subunits. The polypeptide is Ribosome maturation factor RimP (Christiangramia forsetii (strain DSM 17595 / CGMCC 1.15422 / KT0803) (Gramella forsetii)).